A 112-amino-acid polypeptide reads, in one-letter code: Putative pterin-4-alpha-carbinolamine dehydratase (112 aa).

Belongs to the pterin-4-alpha-carbinolamine dehydratase family.

It catalyses the reaction (4aS,6R)-4a-hydroxy-L-erythro-5,6,7,8-tetrahydrobiopterin = (6R)-L-erythro-6,7-dihydrobiopterin + H2O. This is Putative pterin-4-alpha-carbinolamine dehydratase from Shewanella amazonensis (strain ATCC BAA-1098 / SB2B).